Consider the following 708-residue polypeptide: Nucleolar protein 11-like (708 aa).

The protein localises to the nucleus. It localises to the nucleolus. Its function is as follows. Ribosome biogenesis factor. May be required for both optimal rDNA transcription and pre-rRNA processing. This is Nucleolar protein 11-like (nol11) from Danio rerio (Zebrafish).